Here is a 478-residue protein sequence, read N- to C-terminus: Putative sulfate transporter YbaR (478 aa).

Helical transmembrane passes span 19 to 39 (ILAG…FSII), 42 to 62 (VDPM…SIFG), 65 to 85 (PGMI…LVAD), 87 to 107 (GLQY…ILGI), 121 to 141 (VMIG…LPQF), 143 to 163 (GASW…YVLP), 168 to 188 (AVPS…TFHV), 220 to 240 (IIFP…LLTA), 259 to 279 (GQGI…CAMI), 295 to 315 (SAFV…HVVV), 345 to 365 (APLT…VTDD), and 366 to 386 (LSKG…AKIS). The STAS domain occupies 389-478 (KIVSHAEDQK…ASKSLMKQMA (90 aa)).

It belongs to the SLC26A/SulP transporter (TC 2.A.53) family.

The protein resides in the cell membrane. This Bacillus subtilis (strain 168) protein is Putative sulfate transporter YbaR (ybaR).